A 331-amino-acid chain; its full sequence is Centriolar satellite-associated tubulin polyglutamylase complex regulator 1 (331 aa).

The segment at 1–111 (MLSPERLALP…HCLLQLLCPD (111 aa)) is required for interaction with PCM1. Residues 1-225 (MLSPERLALP…SCPPPALVKE (225 aa)) form a required for interaction with TPGS1, LRRC49, and TTLL1 region. The segment at 112-331 (FPLELTQKAA…STEETDESET (220 aa)) is required for interaction with TPGS2. Residues 288–331 (SPEASCLPSRTPPRVGSPWRPLHHSRKVDGESDGSTEETDESET) form a disordered region. Over residues 318–331 (ESDGSTEETDESET) the composition is skewed to acidic residues. S319 is subject to Phosphoserine.

Belongs to the CSTPP1 family. As to quaternary structure, interacts with PCM1. Interacts with TTLL1, TPGS1, TPGS2 and LRRC49; the interactions link CSTPP1 to the complex TPGC. Binds to alpha-tubulin.

The protein resides in the cytoplasm. The protein localises to the cytoskeleton. It is found in the microtubule organizing center. It localises to the centrosome. Its subcellular location is the centriolar satellite. Its function is as follows. Regulator of the tubulin polyglutamylase complex (TPGC) that controls cytoskeletal organization, nuclear shape, and cilium disassembly by balancing microtubule and actin assembly. Regulates the assembly and stability of the TPGC and thereby modulates polyglutamylation of the microtubule, which antagonizes MAP4 binding. The protein is Centriolar satellite-associated tubulin polyglutamylase complex regulator 1 of Homo sapiens (Human).